Consider the following 150-residue polypeptide: MSDNNQALKDAGLKVTLPRLKILEVLQQPECQHISAEELYKKLIDLSEEIGLATVYRVLNQFDDAGIVTRHHFEGGKSVFELSTQHHHDHLVCLDCGEVIEFSDDVIEQRQKEIAAKYNVQLTNHSLYLYGKCGSDGSCKDNPNAHKPKK.

Positions 1–84 are DNA-binding; sequence MSDNNQALKD…GGKSVFELST (84 aa). Residues His33 and Glu81 each coordinate Zn(2+). The dimerization stretch occupies residues 85 to 143; it reads QHHHDHLVCLDCGEVIEFSDDVIEQRQKEIAAKYNVQLTNHSLYLYGKCGSDGSCKDNP. Residues His87 and Asp89 each coordinate Fe cation. His90, Cys93, Cys96, and Glu101 together coordinate Zn(2+). Fe cation contacts are provided by Glu108 and His125.

It belongs to the Fur family. Homodimer.

It is found in the cytoplasm. Functionally, fur acts as a repressor, employing Fe(2+) as a cofactor to bind the operator of the iron transport operon. The chain is Ferric uptake regulation protein (fur) from Vibrio cholerae serotype O1 (strain ATCC 39541 / Classical Ogawa 395 / O395).